Here is a 1298-residue protein sequence, read N- to C-terminus: MSTDNSFGLMRIGLATAEDIRRWSYGEVKKPETINYRTLKPEKDGLFCEKIFGPTRDWECACGKYKRVRFKGIICERCGVEVTRSKVRRDRMGHIELAAPVTHIWYFKGVPSRLGYLLDLAPKDLEKVIYFAAYMITSVDEEARHRDLANLQAEYDQETRVLADQRDSDIAAVAADLEKDLAKLESEGAKAAEKKKARDAADKTMAQIRKRADAELDRKEQVWDRFKNLKVADLEGDEGLYRAMRDKYGQYFEGSMGAEAIQRRLQTFDLEAESEMLRETIKTGKGQRKTRALKRLKVVNAFLTTDNSPEGMVLDAVPVIPPELRPMVQLDGGRFATSDLNDLYRRVINRNNRLKRLLDLGAPEIIVNNEKRMLQEAVDSLFDNGRRGRPVTGPGNRPLKSLSDMLKGKQGRFRQNLLGKRVDYSGRSVIVVGPQLKLHQCGLPKQMALELFKPFVMKRLVDLNHAQNIKSAKRMVERFRPQVWDVLEEVITEHPVLLNRAPTLHRLGIQAFEPQLVEGKALQLHPLVCSAFNADFDGDQMAVHLPLSPEAQAEARLLMLSSHNILKPSDGRAVAVPAQDMIIGLNHLTTVRPDEVGAGNLYATVGEAIMAFDGGDLHLNAPARIGVEGFVPSAAVPAPEGWSEGEIALIETTLGKVLFNELLPDDYPWLDKQATKGTLGQLVNDLAERYPMVVTAQTLDNLKDAGFHWGTWSGVTVAISDITSDFDKAAIMEGYEEQAQRVQQQYDKGLIADDERRSELIDIWNKATDEVAAAMKDGLPELNTINRMVSSGARGNWLQVRQIAGIRGLVANPKGEIIPRPIKSSYREGLSVLEYFSATHGARKGLADTALKTANSGYLTRRLVDVSQDVIVREDDCGTERGLSVTIAAPNADGELVAHEQVENSAFARTLAQDVTGEDGTVLAAAGADVGDVLIGELVAAGVTEIKVRSVLTCESAVGTCAKCYGRSMATGQLADIGEAVGIIAAQSIGEPGTQLTMRTFHTGGVASADDITQGLPRIQELFEARTPKGVAPISEVAGRVTIEDTETSVRLLLTPDDGSEEIAYPVLRRARILVADGEHVPVGTQLVAGAVDPKQVLRVLGPRAAQRFLVDEVQNVYQSQGVGIHDKHVEVIVRQMLRRITVIESGDTDLLPGELTDRARFVAANRAAVAEGRQPASGRDELMGITKASLATDSWLSAASFQETTRVLTQAAMEGKSDPLLGLKENVIIGKLIPAGTGLDRYTKTVVEPTEEAKANLFASPAGFADFDYPGLDQSLGENDFHAVSLDDYDRGGDFRA.

Positions 60, 62, 75, and 78 each coordinate Zn(2+). The Mg(2+) site is built by Asp535, Asp537, and Asp539. Residues Cys877, Cys954, Cys961, and Cys964 each contribute to the Zn(2+) site.

Belongs to the RNA polymerase beta' chain family. As to quaternary structure, the RNAP catalytic core consists of 2 alpha, 1 beta, 1 beta' and 1 omega subunit. When a sigma factor is associated with the core the holoenzyme is formed, which can initiate transcription. Mg(2+) serves as cofactor. The cofactor is Zn(2+).

The catalysed reaction is RNA(n) + a ribonucleoside 5'-triphosphate = RNA(n+1) + diphosphate. In terms of biological role, DNA-dependent RNA polymerase catalyzes the transcription of DNA into RNA using the four ribonucleoside triphosphates as substrates. The chain is DNA-directed RNA polymerase subunit beta' from Micrococcus luteus (strain ATCC 4698 / DSM 20030 / JCM 1464 / CCM 169 / CCUG 5858 / IAM 1056 / NBRC 3333 / NCIMB 9278 / NCTC 2665 / VKM Ac-2230) (Micrococcus lysodeikticus).